The chain runs to 539 residues: Membrane protein insertase YidC (539 aa).

A helical transmembrane segment spans residues 6–26 (NILLIALALVSFLLFQQWNVA). Residues 35-44 (EQAQSGSTLP) are compositionally biased toward polar residues. The tract at residues 35–55 (EQAQSGSTLPAPSYADDLDPA) is disordered. A run of 4 helical transmembrane segments spans residues 341 to 361 (SFIQ…TFIV), 416 to 436 (LGGC…YWAL), 454 to 474 (LSAQ…MFLI), and 495 to 515 (PVMF…YWLV).

The protein belongs to the OXA1/ALB3/YidC family. Type 1 subfamily. Interacts with the Sec translocase complex via SecD. Specifically interacts with transmembrane segments of nascent integral membrane proteins during membrane integration.

Its subcellular location is the cell inner membrane. Its function is as follows. Required for the insertion and/or proper folding and/or complex formation of integral membrane proteins into the membrane. Involved in integration of membrane proteins that insert both dependently and independently of the Sec translocase complex, as well as at least some lipoproteins. Aids folding of multispanning membrane proteins. In Vibrio atlanticus (strain LGP32) (Vibrio splendidus (strain Mel32)), this protein is Membrane protein insertase YidC.